Consider the following 338-residue polypeptide: Transcription factor GRA2 (338 aa).

Disordered stretches follow at residues 171–230 (CQDS…PHYA) and 256–277 (TQHE…DGGS). The segment covering 174–203 (SGVSQPSNLADDTLGQGQPVSTVVQPQHPG) has biased composition (polar residues). A basic motif region spans residues 223–236 (KRQRPHYAIEKRYR). The bHLH domain occupies 223–303 (KRQRPHYAIE…NQATLCIRQL (81 aa)). Residues 237 to 303 (AGLQERFEAL…NQATLCIRQL (67 aa)) form a helix-loop-helix motif region.

It is found in the nucleus. In terms of biological role, transcription factor that specifically regulates the expression of the gene cluster that mediates the biosynthesis of gramillins A and B, bicyclic lipopeptides that induce cell death in maize leaves but not in wheat leaves. In Gibberella zeae (strain ATCC MYA-4620 / CBS 123657 / FGSC 9075 / NRRL 31084 / PH-1) (Wheat head blight fungus), this protein is Transcription factor GRA2 (GRA2).